The primary structure comprises 687 residues: Dentin sialophosphoprotein (687 aa).

The first 17 residues, 1–17, serve as a signal peptide directing secretion; the sequence is MKTKIIIYICIWATAWA. A disordered region spans residues 54-113; it reads NNATNDDSPKGSELGRQVHSNGGYERDRNGSESIAVGGKSSPTQPILANAQGNSAKERED. A glycan (N-linked (GlcNAc...) asparagine) is linked at asparagine 55. Position 57 is a phosphothreonine; by CK2 (threonine 57). Asparagine 82 is a glycosylation site (N-linked (GlcNAc...) asparagine). A compositionally biased stretch (polar residues) spans 93 to 107; that stretch reads SSPTQPILANAQGNS. Asparagine 128 is a glycosylation site (N-linked (GlcNAc...) asparagine). The segment covering 146–160 has biased composition (basic and acidic residues); the sequence is EAKESKVHGQPHQDT. The tract at residues 146 to 687 is disordered; the sequence is EAKESKVHGQ…SDSNHSTSDD (542 aa). Residues 161 to 194 are compositionally biased toward polar residues; that stretch reads KTGLASDTSQNGDATLVQENEPQVAGSKNSTNHE. Residue asparagine 189 is glycosylated (N-linked (GlcNAc...) asparagine). At serine 226 the chain carries Phosphoserine; by CK2. Serine 253 bears the Phosphoserine; by CK1 mark. The segment covering 262–275 has biased composition (basic and acidic residues); the sequence is GDGRESHDGTEGHE. Over residues 276 to 292 the composition is skewed to polar residues; the sequence is GQSSGGNNDNRGQGSVS. Serine 278 is subject to Phosphoserine; by CK1. The residue at position 292 (serine 292) is a Phosphoserine; by CK2. Serine 298 carries the phosphoserine; by CK1 modification. The N-linked (GlcNAc...) asparagine glycan is linked to asparagine 312. Residue serine 315 is modified to Phosphoserine; by CK2. A phosphothreonine; by CK2 mark is found at threonine 319 and threonine 329. Serine 337 and serine 345 each carry phosphoserine; by CK2. Residues 352–375 are compositionally biased toward polar residues; sequence SGQSQNQGLETEGSSTGNKSSITK. Residue serine 366 is modified to Phosphoserine; by CK1. Asparagine 369 carries N-linked (GlcNAc...) asparagine glycosylation. Basic and acidic residues predominate over residues 386-417; it reads SNGHHGMELDKRNSPKQGESDKPQGAAEKSDT. A compositionally biased stretch (polar residues) spans 418-432; sequence HNNMGHSRIGSSSNS. Residues 447-460 are compositionally biased toward low complexity; that stretch reads GDDPNSSDESNGSD. Acidic residues predominate over residues 500 to 521; that stretch reads DDSSDDTSDTDDSDSNGDDDSE. The span at 522–545 shows a compositional bias: basic and acidic residues; it reads SKDKDESDNSNHDNDSDSESKSDS. The segment covering 555-598 has biased composition (low complexity); the sequence is SSDSSDSSDSSETSDSSDSSDTSDSSDSSDSSDSSNSSDTSDSS. A compositionally biased stretch (acidic residues) spans 599-617; that stretch reads DSSDGDSSDGDSSDSDSSD. Over residues 618-639 the composition is skewed to low complexity; sequence SDSSNSSDSDSSDSSDSSSSDS. Residues 667–677 show a composition bias toward acidic residues; the sequence is SDSDSDSDSEG. Residues 678 to 687 show a composition bias toward low complexity; that stretch reads SDSNHSTSDD.

As to quaternary structure, interacts with FBLN7. In terms of processing, DSP is glycosylated. In terms of tissue distribution, specifically expressed in teeth, mainly in odontoblasts and transiently in pre-ameloblasts.

The protein resides in the secreted. Its subcellular location is the extracellular space. The protein localises to the extracellular matrix. DSP may be an important factor in dentinogenesis. DPP may bind high amount of calcium and facilitate initial mineralization of dentin matrix collagen as well as regulate the size and shape of the crystals. This Rattus norvegicus (Rat) protein is Dentin sialophosphoprotein (Dspp).